The following is a 219-amino-acid chain: 7-cyano-7-deazaguanine synthase (219 aa).

An ATP-binding site is contributed by 10 to 20 (FSGGQDSTTCL). Residues cysteine 187, cysteine 196, cysteine 199, and cysteine 202 each contribute to the Zn(2+) site.

The protein belongs to the QueC family. As to quaternary structure, homodimer. It depends on Zn(2+) as a cofactor.

The enzyme catalyses 7-carboxy-7-deazaguanine + NH4(+) + ATP = 7-cyano-7-deazaguanine + ADP + phosphate + H2O + H(+). The protein operates within purine metabolism; 7-cyano-7-deazaguanine biosynthesis. Catalyzes the ATP-dependent conversion of 7-carboxy-7-deazaguanine (CDG) to 7-cyano-7-deazaguanine (preQ(0)). The sequence is that of 7-cyano-7-deazaguanine synthase from Lysinibacillus sphaericus (strain C3-41).